A 136-amino-acid polypeptide reads, in one-letter code: Large ribosomal subunit protein bL21 (136 aa).

This sequence belongs to the bacterial ribosomal protein bL21 family. In terms of assembly, part of the 50S ribosomal subunit. Contacts protein L20.

Its function is as follows. This protein binds to 23S rRNA in the presence of protein L20. This chain is Large ribosomal subunit protein bL21, found in Trichodesmium erythraeum (strain IMS101).